Reading from the N-terminus, the 496-residue chain is Lysine--tRNA ligase (496 aa).

Mg(2+) contacts are provided by E409 and E416.

The protein belongs to the class-II aminoacyl-tRNA synthetase family. As to quaternary structure, homodimer. The cofactor is Mg(2+).

It is found in the cytoplasm. The enzyme catalyses tRNA(Lys) + L-lysine + ATP = L-lysyl-tRNA(Lys) + AMP + diphosphate. The polypeptide is Lysine--tRNA ligase (Streptococcus pneumoniae (strain CGSP14)).